Consider the following 348-residue polypeptide: Mediator of RNA polymerase II transcription subunit 18 (348 aa).

Residues 152 to 218 (MDVDLEHKDK…KNDEVKHSEV (67 aa)) are compositionally biased toward basic and acidic residues. The disordered stretch occupies residues 152-227 (MDVDLEHKDK…VNLEDGAETG (76 aa)). The stretch at 167–223 (DTKEKEEDKKEEDKKEEDKKEEDKKEEDKKEEDKKEEEKVEKKNDEVKHSEVNLEDG) forms a coiled coil.

The protein belongs to the Mediator complex subunit 18 family. Component of the Mediator complex.

It localises to the nucleus. In terms of biological role, component of the Mediator complex, a coactivator involved in the regulated transcription of nearly all RNA polymerase II-dependent genes. Mediator functions as a bridge to convey information from gene-specific regulatory proteins to the basal RNA polymerase II transcription machinery. Mediator is recruited to promoters by direct interactions with regulatory proteins and serves as a scaffold for the assembly of a functional preinitiation complex with RNA polymerase II and the general transcription factors. The protein is Mediator of RNA polymerase II transcription subunit 18 (SRB5) of Scheffersomyces stipitis (strain ATCC 58785 / CBS 6054 / NBRC 10063 / NRRL Y-11545) (Yeast).